We begin with the raw amino-acid sequence, 599 residues long: Nucleolar protein dnt1 (599 aa).

At Ser-174 the chain carries Phosphoserine. Disordered stretches follow at residues 210 to 262 and 292 to 599; these read TQEE…PSRL and DKSL…AALV. Residues 218 to 241 are compositionally biased toward polar residues; sequence QSFNSSLTPSQPTTYNRANFFSIN. Residues 242–251 are compositionally biased toward low complexity; it reads DASSDSSSDA. Residues 292–303 show a composition bias toward basic and acidic residues; that stretch reads DKSLRSSTREVS. The residue at position 306 (Ser-306) is a Phosphoserine. The span at 307–320 shows a compositional bias: acidic residues; it reads PNEDSVNDDSSSDV. Basic and acidic residues predominate over residues 321-333; that stretch reads SDEKETEAKHEIR. Residues 344–354 are compositionally biased toward polar residues; sequence SHPSTAVPSEN. Residues 364 to 380 show a composition bias toward low complexity; that stretch reads LSESSTTSISSSPSENS. Polar residues predominate over residues 390-401; the sequence is DSPNKSLVNDNV. The segment covering 402–413 has biased composition (basic and acidic residues); it reads SAKHDKESENGK. The segment covering 421 to 431 has biased composition (polar residues); the sequence is QTLVTTSTISA. Over residues 436–452 the composition is skewed to acidic residues; that stretch reads PSDEIGSENDSDSDSDS. The segment covering 456 to 480 has biased composition (polar residues); that stretch reads VPLSQLQKKSQQRNSVSHEIQNRGT. Basic and acidic residues predominate over residues 483–500; it reads SPKEPKAKPSTERPETHR. A compositionally biased stretch (polar residues) spans 501 to 514; the sequence is TLSYSRLSELSKTF. Thr-513 is subject to Phosphothreonine. Basic and acidic residues-rich tracts occupy residues 533–542 and 558–574; these read ESKEEGRSDE and NSEKEDRSNPIPVEKRA.

In terms of processing, phosphorylated by clp1.

Its subcellular location is the cytoplasm. The protein resides in the nucleus. It is found in the nucleolus. The protein localises to the cytoskeleton. It localises to the spindle. In terms of biological role, negatively regulates the septation initiation network (SIN) pathway, independently of the cdc14 phosphatase clp1. May also have a role in silencing rDNA transcription. Required for maintaining the exclusive nucleolus localization of nuc1. The protein is Nucleolar protein dnt1 (dnt1) of Schizosaccharomyces pombe (strain 972 / ATCC 24843) (Fission yeast).